Consider the following 414-residue polypeptide: Acyltransferase MYCGRDRAFT_85486 (414 aa).

The segment covering 16-25 (DGTSTVTIRP) has biased composition (polar residues). The segment at 16–47 (DGTSTVTIRPTQKAAPSEEPSQDTAPSKKDSN) is disordered. H329 lines the substrate pocket. E367 serves as the catalytic Proton acceptor.

This sequence belongs to the lysine N-acyltransferase mbtK family.

Its pathway is siderophore biosynthesis. Acyltransferase; part of the gene cluster 14 that mediates the biosynthesis of a ferrichrome A-like siderophore which may contribute to organismal virulence. The first step of siderophore biosynthesis is performed by the HMG-CoA synthase (HMGS) MYCGRDRAFT_54740 which catalyzes the generation of HMG-CoA and CoA using acetoacetyl-CoA and acetyl-CoA as substrates. The enoyl-CoA isomerase/hydratase MYCGRDRAFT_76805 then catalyzes the conversion of HMG-CoA to methylglutaconyl-CoA. The acyltransferase MYCGRDRAFT_85486 then fuses methylglutaconyl-CoA with hydroxyornithine to yield methylglutaconyl hydroxyornithine. Methylglutaconyl hydroxyornithine is then available for use by the nonribosomal peptide synthetase NRPS2 to generate the ferrichrome A-like siderophore. In Zymoseptoria tritici (strain CBS 115943 / IPO323) (Speckled leaf blotch fungus), this protein is Acyltransferase MYCGRDRAFT_85486.